We begin with the raw amino-acid sequence, 236 residues long: MTRRYWNINLEEMMEAGVHFGHGTRKWNPRMAPYISAKRKGIHITNLTKTARFLSEACDLVFDAASRGKQFLIVGTKNKAADSVARAAIRARCHYVNKKWLGGMLTNWSTTETRLHKFRDLRTEQKAGRLNRLPKRDAAMLKRQLSHLQTYLGGIKYMTGLPDIVIIVDQQEEYTALRECITLGIPTICLIDTNCDPDLADISIPANDDAIASIRLILNKLVFAICEGRSSYIRNP.

It belongs to the universal ribosomal protein uS2 family.

It localises to the plastid. The protein resides in the chloroplast. This chain is Small ribosomal subunit protein uS2c (rps2), found in Eucalyptus globulus subsp. globulus (Tasmanian blue gum).